Reading from the N-terminus, the 652-residue chain is 1,4-alpha-glucan branching enzyme GlgB (652 aa).

Asp322 acts as the Nucleophile in catalysis. The Proton donor role is filled by Glu373.

It belongs to the glycosyl hydrolase 13 family. GlgB subfamily. Monomer.

The enzyme catalyses Transfers a segment of a (1-&gt;4)-alpha-D-glucan chain to a primary hydroxy group in a similar glucan chain.. The protein operates within glycan biosynthesis; glycogen biosynthesis. In terms of biological role, catalyzes the formation of the alpha-1,6-glucosidic linkages in glycogen by scission of a 1,4-alpha-linked oligosaccharide from growing alpha-1,4-glucan chains and the subsequent attachment of the oligosaccharide to the alpha-1,6 position. The protein is 1,4-alpha-glucan branching enzyme GlgB of Deinococcus geothermalis (strain DSM 11300 / CIP 105573 / AG-3a).